Reading from the N-terminus, the 204-residue chain is Thymidylate kinase (204 aa).

11-18 (GLDKSGKT) is a binding site for ATP.

It belongs to the thymidylate kinase family.

It catalyses the reaction dTMP + ATP = dTDP + ADP. It participates in pyrimidine metabolism; dTTP biosynthesis. This Vaccinia virus (strain Ankara) (VACV) protein is Thymidylate kinase (TMK).